A 157-amino-acid polypeptide reads, in one-letter code: Transcription elongation factor GreA (157 aa).

Residues 47-75 (SGEYEDAKKAQALLEGRIRELKHLLSRAE) adopt a coiled-coil conformation.

The protein belongs to the GreA/GreB family.

Functionally, necessary for efficient RNA polymerase transcription elongation past template-encoded arresting sites. The arresting sites in DNA have the property of trapping a certain fraction of elongating RNA polymerases that pass through, resulting in locked ternary complexes. Cleavage of the nascent transcript by cleavage factors such as GreA or GreB allows the resumption of elongation from the new 3'terminus. GreA releases sequences of 2 to 3 nucleotides. This chain is Transcription elongation factor GreA, found in Chloroflexus aurantiacus (strain ATCC 29366 / DSM 635 / J-10-fl).